We begin with the raw amino-acid sequence, 361 residues long: Phospho-N-acetylmuramoyl-pentapeptide-transferase (361 aa).

10 consecutive transmembrane segments (helical) span residues 27–47 (GALF…ISLL), 72–92 (TPTM…LLWA), 99–119 (VWIT…DDYL), 139–159 (ALIA…GLAY), 169–189 (AIVN…VGAG), 200–220 (GLAI…AYLV), 240–260 (LAVV…FNAP), 264–284 (IFMG…VAVA), 289–309 (IVLA…IIQV), and 338–358 (QVVI…LATL).

Belongs to the glycosyltransferase 4 family. MraY subfamily. Requires Mg(2+) as cofactor.

The protein resides in the cell inner membrane. The catalysed reaction is UDP-N-acetyl-alpha-D-muramoyl-L-alanyl-gamma-D-glutamyl-meso-2,6-diaminopimeloyl-D-alanyl-D-alanine + di-trans,octa-cis-undecaprenyl phosphate = di-trans,octa-cis-undecaprenyl diphospho-N-acetyl-alpha-D-muramoyl-L-alanyl-D-glutamyl-meso-2,6-diaminopimeloyl-D-alanyl-D-alanine + UMP. Its pathway is cell wall biogenesis; peptidoglycan biosynthesis. Catalyzes the initial step of the lipid cycle reactions in the biosynthesis of the cell wall peptidoglycan: transfers peptidoglycan precursor phospho-MurNAc-pentapeptide from UDP-MurNAc-pentapeptide onto the lipid carrier undecaprenyl phosphate, yielding undecaprenyl-pyrophosphoryl-MurNAc-pentapeptide, known as lipid I. The polypeptide is Phospho-N-acetylmuramoyl-pentapeptide-transferase (Methylobacterium nodulans (strain LMG 21967 / CNCM I-2342 / ORS 2060)).